The sequence spans 532 residues: Bifunctional purine biosynthesis protein PurH (532 aa).

The region spanning 1–147 (MAKIKRALIS…KNYRSVTVVT (147 aa)) is the MGS-like domain.

This sequence belongs to the PurH family.

It carries out the reaction (6R)-10-formyltetrahydrofolate + 5-amino-1-(5-phospho-beta-D-ribosyl)imidazole-4-carboxamide = 5-formamido-1-(5-phospho-D-ribosyl)imidazole-4-carboxamide + (6S)-5,6,7,8-tetrahydrofolate. The catalysed reaction is IMP + H2O = 5-formamido-1-(5-phospho-D-ribosyl)imidazole-4-carboxamide. It functions in the pathway purine metabolism; IMP biosynthesis via de novo pathway; 5-formamido-1-(5-phospho-D-ribosyl)imidazole-4-carboxamide from 5-amino-1-(5-phospho-D-ribosyl)imidazole-4-carboxamide (10-formyl THF route): step 1/1. The protein operates within purine metabolism; IMP biosynthesis via de novo pathway; IMP from 5-formamido-1-(5-phospho-D-ribosyl)imidazole-4-carboxamide: step 1/1. The polypeptide is Bifunctional purine biosynthesis protein PurH (Magnetococcus marinus (strain ATCC BAA-1437 / JCM 17883 / MC-1)).